The sequence spans 442 residues: NAD kinase 2, mitochondrial (442 aa).

The transit peptide at 1–62 directs the protein to the mitochondrion; sequence MTCYRGFLLG…RELAGCGSRA (62 aa). Residues 24–36 show a composition bias toward low complexity; it reads RGPGAGGPAARPR. Positions 24–60 are disordered; sequence RGPGAGGPAARPRLGGDGGGRRHLGQGQPRELAGCGS. An N6-acetyllysine; alternate modification is found at K76. At K76 the chain carries N6-succinyllysine; alternate. S188 is modified (phosphoserine). At K302 the chain carries N6-succinyllysine. K317 carries the N6-acetyllysine; alternate modification. The residue at position 317 (K317) is an N6-succinyllysine; alternate. A Phosphoserine modification is found at S367. An N6-acetyllysine modification is found at K397.

Belongs to the NAD kinase family. As to quaternary structure, homodimer. In terms of tissue distribution, widely expressed.

The protein localises to the mitochondrion. The enzyme catalyses NAD(+) + ATP = ADP + NADP(+) + H(+). With respect to regulation, inhibited by NADH, NADPH and NADP(+). Mitochondrial NAD(+) kinase that phosphorylates NAD(+) to yield NADP(+). Can use both ATP or inorganic polyphosphate as the phosphoryl donor. Also has weak NADH kinase activity in vitro; however NADH kinase activity is much weaker than the NAD(+) kinase activity and may not be relevant in vivo. The sequence is that of NAD kinase 2, mitochondrial (NADK2) from Homo sapiens (Human).